A 371-amino-acid chain; its full sequence is Vasopressin V2 receptor (371 aa).

The tract at residues 1–30 (MLMASTTSAVPGHPSLPSLPSNSSQERPLD) is disordered. Over 1 to 38 (MLMASTTSAVPGHPSLPSLPSNSSQERPLDTRDPLLAR) the chain is Extracellular. Residues 15 to 24 (SLPSLPSNSS) are compositionally biased toward low complexity. N-linked (GlcNAc...) asparagine glycosylation occurs at N22. A helical membrane pass occupies residues 39–63 (AELALLSIVFVAVALSNGLVLAALA). Over 64–77 (RRGRRGHWAPIHVF) the chain is Cytoplasmic. A helical membrane pass occupies residues 78 to 98 (IGHLCLADLAVALFQVLPQLA). Residues 99–113 (WKATDRFRGPDALCR) are Extracellular-facing. Residues 114 to 135 (AVKYLQMVGMYASSYMILAMTL) traverse the membrane as a helical segment. Over 136 to 159 (DRHRAICRPMLAYRHGSGAHWNRP) the chain is Cytoplasmic. The chain crosses the membrane as a helical span at residues 160–180 (VLVAWAFSLLLSLPQLFIFAQ). Over 181–200 (RNVEGGSGVTDCWACFAEPW) the chain is Extracellular. Residues 201 to 220 (GRRTYVTWIALMVFVAPTLG) traverse the membrane as a helical segment. Over 221 to 271 (IAACQVLIFREIHASLVPGPSERPGGRRRGRRTGSPGEGAHVSAAVAKTVR) the chain is Cytoplasmic. The tract at residues 240–259 (PSERPGGRRRGRRTGSPGEG) is disordered. The chain crosses the membrane as a helical span at residues 272–293 (MTLVIVVVYVLCWAPFFLVQLW). Over 294 to 308 (AAWDPEAPLEGAPFV) the chain is Extracellular. A helical membrane pass occupies residues 309–328 (LLMLLASLNSCTNPWIYASF). Topologically, residues 329-371 (SSSVSSELRSLLCCARGRTPPSLGPQDESCTTASSSLAKDTSS) are cytoplasmic. Residues C341 and C342 are each lipidated (S-palmitoyl cysteine). Residues 349–371 (PSLGPQDESCTTASSSLAKDTSS) are disordered. Positions 356 to 371 (ESCTTASSSLAKDTSS) are enriched in polar residues.

It belongs to the G-protein coupled receptor 1 family. Vasopressin/oxytocin receptor subfamily. Interacts with ARRDC4. Identified in a complex containing at least ARRDC4, V2R and HGS. Interacts with TMEM147. As to expression, kidney.

It is found in the cell membrane. Its function is as follows. Receptor for arginine vasopressin. The activity of this receptor is mediated by G proteins which activate adenylate cyclase. Involved in renal water reabsorption. In Homo sapiens (Human), this protein is Vasopressin V2 receptor (AVPR2).